Consider the following 754-residue polypeptide: 5-methyltetrahydropteroyltriglutamate--homocysteine methyltransferase (754 aa).

5-methyltetrahydropteroyltri-L-glutamate is bound by residues 15–18 (RELK) and Lys-114. L-homocysteine is bound by residues 430–432 (IGS) and Glu-483. L-methionine is bound by residues 430 to 432 (IGS) and Glu-483. Residues 514 to 515 (RC) and Trp-560 each bind 5-methyltetrahydropteroyltri-L-glutamate. Position 598 (Asp-598) interacts with L-homocysteine. An L-methionine-binding site is contributed by Asp-598. Glu-604 is a 5-methyltetrahydropteroyltri-L-glutamate binding site. The Zn(2+) site is built by His-641, Cys-643, and Glu-665. His-694 functions as the Proton donor in the catalytic mechanism. Residue Cys-726 participates in Zn(2+) binding.

It belongs to the vitamin-B12 independent methionine synthase family. The cofactor is Zn(2+).

It carries out the reaction 5-methyltetrahydropteroyltri-L-glutamate + L-homocysteine = tetrahydropteroyltri-L-glutamate + L-methionine. Its pathway is amino-acid biosynthesis; L-methionine biosynthesis via de novo pathway; L-methionine from L-homocysteine (MetE route): step 1/1. Catalyzes the transfer of a methyl group from 5-methyltetrahydrofolate to homocysteine resulting in methionine formation. The polypeptide is 5-methyltetrahydropteroyltriglutamate--homocysteine methyltransferase (Campylobacter jejuni subsp. doylei (strain ATCC BAA-1458 / RM4099 / 269.97)).